We begin with the raw amino-acid sequence, 137 residues long: Large ribosomal subunit protein uL16 (137 aa).

The protein belongs to the universal ribosomal protein uL16 family. Part of the 50S ribosomal subunit.

In terms of biological role, binds 23S rRNA and is also seen to make contacts with the A and possibly P site tRNAs. This Stenotrophomonas maltophilia (strain K279a) protein is Large ribosomal subunit protein uL16.